The chain runs to 181 residues: ADP-ribosylation factor 1 (181 aa).

A lipid anchor (N-myristoyl glycine) is attached at glycine 2. The segment at leucine 3–lysine 16 is important for the stable binding to the membranes. GTP is bound by residues alanine 27–threonine 32, asparagine 126–aspartate 129, and alanine 160.

It belongs to the small GTPase superfamily. Arf family. As to quaternary structure, may interact with GTPase RAB5b.

Its subcellular location is the golgi apparatus membrane. The enzyme catalyses GTP + H2O = GDP + phosphate + H(+). With respect to regulation, alternates between an inactive GDP-bound form and an active GTP-bound form. Intrinsic GTPase activity is almost undetectable in vitro. Activated by a guanine nucleotide-exchange factor (GEF) and inactivated by GTPase-activating protein ARFGAP1. Functionally, small GTPase involved in protein trafficking between different compartments. Modulates vesicle budding and uncoating within the Golgi complex. In its GTP-bound form, triggers the recruitment of coatomer proteins to the Golgi membrane. The hydrolysis of ARF1-bound GTP, which is mediated by ARFGAPs proteins, is required for dissociation of coat proteins from Golgi membranes and vesicles. Regulates the transport of N-acylated AK2 to the parasitophorous vacuole membrane. May be involved in the activation of lipid kinase PIP5K. This Plasmodium falciparum (isolate 3D7) protein is ADP-ribosylation factor 1.